Here is a 299-residue protein sequence, read N- to C-terminus: MQENSRLRIAIQKSGRLSKDSIALLESIGVKLRIHDQSLIAFSTNLPIDLLRVRDDDIPGLIFDGVVDLGIVGENVLEENELERKSKNENADFIMLKKLDFGGCRLSLALPENSEYKGVESFKNLRIATSYPQLLKRFMEENNIPYKTCMLTGSVEVAPSANLADGICDLVSSGATLKANGLKEVMVIYKSKACIIQRKESLVSHKQELIDKLLIRINGVMQARESKYIMLHAPIEKLEKITALLPGVEKPTILPLENDKARVALHMVSQENLFWETMEALKKEGASAILVLPIEKMLS.

It belongs to the ATP phosphoribosyltransferase family. Long subfamily. It depends on Mg(2+) as a cofactor.

The protein localises to the cytoplasm. The catalysed reaction is 1-(5-phospho-beta-D-ribosyl)-ATP + diphosphate = 5-phospho-alpha-D-ribose 1-diphosphate + ATP. The protein operates within amino-acid biosynthesis; L-histidine biosynthesis; L-histidine from 5-phospho-alpha-D-ribose 1-diphosphate: step 1/9. Its activity is regulated as follows. Feedback inhibited by histidine. In terms of biological role, catalyzes the condensation of ATP and 5-phosphoribose 1-diphosphate to form N'-(5'-phosphoribosyl)-ATP (PR-ATP). Has a crucial role in the pathway because the rate of histidine biosynthesis seems to be controlled primarily by regulation of HisG enzymatic activity. The sequence is that of ATP phosphoribosyltransferase from Campylobacter lari (strain RM2100 / D67 / ATCC BAA-1060).